The chain runs to 500 residues: ATP synthase subunit alpha (500 aa).

167–174 is an ATP binding site; that stretch reads GDRQTGKT.

It belongs to the ATPase alpha/beta chains family. F-type ATPases have 2 components, CF(1) - the catalytic core - and CF(0) - the membrane proton channel. CF(1) has five subunits: alpha(3), beta(3), gamma(1), delta(1), epsilon(1). CF(0) has three main subunits: a(1), b(2) and c(9-12). The alpha and beta chains form an alternating ring which encloses part of the gamma chain. CF(1) is attached to CF(0) by a central stalk formed by the gamma and epsilon chains, while a peripheral stalk is formed by the delta and b chains.

The protein resides in the cell inner membrane. The catalysed reaction is ATP + H2O + 4 H(+)(in) = ADP + phosphate + 5 H(+)(out). Functionally, produces ATP from ADP in the presence of a proton gradient across the membrane. The alpha chain is a regulatory subunit. The sequence is that of ATP synthase subunit alpha from Wolinella succinogenes (strain ATCC 29543 / DSM 1740 / CCUG 13145 / JCM 31913 / LMG 7466 / NCTC 11488 / FDC 602W) (Vibrio succinogenes).